A 64-amino-acid polypeptide reads, in one-letter code: Large ribosomal subunit protein bL35 (64 aa).

The protein belongs to the bacterial ribosomal protein bL35 family.

In Desulforudis audaxviator (strain MP104C), this protein is Large ribosomal subunit protein bL35.